Consider the following 22-residue polypeptide: Short-chain-enoyl-CoA hydratase (22 aa).

It belongs to the enoyl-CoA hydratase/isomerase family.

The enzyme catalyses a short-chain (3S)-3-hydroxyacyl-CoA = a short-chain (2E)-enoyl-CoA + H2O. Its pathway is lipid metabolism; butanoate metabolism. The protein is Short-chain-enoyl-CoA hydratase (crt) of Clostridium pasteurianum.